We begin with the raw amino-acid sequence, 1372 residues long: Serine protease pic autotransporter (1372 aa).

The signal sequence occupies residues 1 to 55 (MNKVYSLKYCPVTGGLIAVSELARRVIKKTCRRLTHILLAGIPAICLCYSQISQA). The region spanning 56–301 (GIVRSDIAYQ…NVIPTDYLNQ (246 aa)) is the Peptidase S6 domain. Residues His-127, Asp-155, and Ser-258 each act as charge relay system in the active site. One can recognise an Autotransporter domain in the interval 1106–1372 (DTNGDAGAWA…AVNANFRYMF (267 aa)).

Post-translationally, cleaved to release the mature protein from the outer membrane.

The protein localises to the periplasm. It is found in the secreted. Its subcellular location is the cell surface. The protein resides in the cell outer membrane. Its function is as follows. Involved in intestinal colonization, displays in vitro mucinolytic activity, serum resistance, and hemagglutination. Important to penetrate the intestinal mucus layer. In Shigella flexneri, this protein is Serine protease pic autotransporter (pic).